Here is a 172-residue protein sequence, read N- to C-terminus: L-amino acid oxidase (172 aa).

44–47 (GPMR) serves as a coordination point for FAD. Substrate contacts are provided by Arg-47 and His-103.

Belongs to the flavin monoamine oxidase family. FIG1 subfamily. In terms of assembly, heterodimer; non-covalently linked. Requires FAD as cofactor. In terms of processing, N-glycosylated. In terms of tissue distribution, expressed by the venom gland.

The protein localises to the secreted. It carries out the reaction an L-alpha-amino acid + O2 + H2O = a 2-oxocarboxylate + H2O2 + NH4(+). The catalysed reaction is L-leucine + O2 + H2O = 4-methyl-2-oxopentanoate + H2O2 + NH4(+). The enzyme catalyses L-phenylalanine + O2 + H2O = 3-phenylpyruvate + H2O2 + NH4(+). It catalyses the reaction L-tryptophan + O2 + H2O = indole-3-pyruvate + H2O2 + NH4(+). It carries out the reaction L-methionine + O2 + H2O = 4-methylsulfanyl-2-oxobutanoate + H2O2 + NH4(+). The catalysed reaction is L-isoleucine + O2 + H2O = (S)-3-methyl-2-oxopentanoate + H2O2 + NH4(+). The enzyme catalyses L-arginine + O2 + H2O = 5-guanidino-2-oxopentanoate + H2O2 + NH4(+). It catalyses the reaction L-tyrosine + O2 + H2O = 3-(4-hydroxyphenyl)pyruvate + H2O2 + NH4(+). Its activity is regulated as follows. Activity is increased by Mn(2+) ions. Inhibited by Zn(2+), Ni(2+), Co(2+), Cu(2+) and Al(3+). No significant activity change by Na(+), K(+), Ca(2+), Mg(2+) and Ba(2+) ions. Both isoform are completely inhibited by L-Cys and reduced glutathione. O-phenanthroline, beta-mercaptoethanol and PMSF completely inhibit the enzymatic activity of LAAOII, but have no activity on LAAOI. Iodoacetic acid inhibits the enzymatic activity of LAAOII by 46% but has no effect on the LAAOI activity. Catalyzes an oxidative deamination of predominantly hydrophobic and aromatic L-amino acids, thus producing hydrogen peroxide that may contribute to the diverse toxic effects of this enzyme. Shows high specificity for L-Arg, L-Met, L-Phe, L-Leu, L-Tyr, L-Ile and L-Trp, low specificity for L-Val, L-Ala, L-Asn, L-Gln, and no specificity for L-Pro, L-Ser, L-Thr, L-Cys, L-Gly and L-Asp. Exhibits diverse biological activities, such as hemorrhage, hemolysis, edema, antibacterial and antiparasitic activities, as well as regulation of platelet aggregation. Its effect on platelets is controversial, since it either induces aggregation or inhibits agonist-induced aggregation. These different effects are probably due to different experimental conditions. This is L-amino acid oxidase from Cerastes cerastes (Horned desert viper).